We begin with the raw amino-acid sequence, 380 residues long: Ribosomal RNA large subunit methyltransferase G (380 aa).

Belongs to the methyltransferase superfamily. RlmG family.

The protein localises to the cytoplasm. It carries out the reaction guanosine(1835) in 23S rRNA + S-adenosyl-L-methionine = N(2)-methylguanosine(1835) in 23S rRNA + S-adenosyl-L-homocysteine + H(+). In terms of biological role, specifically methylates the guanine in position 1835 (m2G1835) of 23S rRNA. This Aeromonas hydrophila subsp. hydrophila (strain ATCC 7966 / DSM 30187 / BCRC 13018 / CCUG 14551 / JCM 1027 / KCTC 2358 / NCIMB 9240 / NCTC 8049) protein is Ribosomal RNA large subunit methyltransferase G.